The sequence spans 338 residues: Phospho-2-dehydro-3-deoxyheptonate aldolase (338 aa).

Belongs to the class-I DAHP synthase family. Homotetramer. Requires a divalent metal cation as cofactor.

It catalyses the reaction D-erythrose 4-phosphate + phosphoenolpyruvate + H2O = 7-phospho-2-dehydro-3-deoxy-D-arabino-heptonate + phosphate. The protein operates within metabolic intermediate biosynthesis; chorismate biosynthesis; chorismate from D-erythrose 4-phosphate and phosphoenolpyruvate: step 1/7. Inhibited by L-phenylalanine and L-tyrosine. Functionally, catalyzes the condensation of phosphoenolpyruvate (PEP) and D-erythrose-4-phosphate (E4P) giving rise to 3-deoxy-D-arabino-heptulosonate-7-phosphate (DAHP). The sequence is that of Phospho-2-dehydro-3-deoxyheptonate aldolase (aroF) from Thermotoga maritima (strain ATCC 43589 / DSM 3109 / JCM 10099 / NBRC 100826 / MSB8).